A 354-amino-acid chain; its full sequence is Histidinol-phosphate aminotransferase 1 (354 aa).

The residue at position 209 (Lys209) is an N6-(pyridoxal phosphate)lysine.

Belongs to the class-II pyridoxal-phosphate-dependent aminotransferase family. Histidinol-phosphate aminotransferase subfamily. In terms of assembly, homodimer. Pyridoxal 5'-phosphate serves as cofactor.

The enzyme catalyses L-histidinol phosphate + 2-oxoglutarate = 3-(imidazol-4-yl)-2-oxopropyl phosphate + L-glutamate. Its pathway is amino-acid biosynthesis; L-histidine biosynthesis; L-histidine from 5-phospho-alpha-D-ribose 1-diphosphate: step 7/9. This Oceanobacillus iheyensis (strain DSM 14371 / CIP 107618 / JCM 11309 / KCTC 3954 / HTE831) protein is Histidinol-phosphate aminotransferase 1 (hisC1).